The following is a 458-amino-acid chain: Bifunctional protein GlmU (458 aa).

The pyrophosphorylase stretch occupies residues 1 to 232; that stretch reads MISPLSVIIL…TFEIEGVNNR (232 aa). UDP-N-acetyl-alpha-D-glucosamine-binding positions include 10–13, Lys-24, Gln-79, 84–85, 106–108, Gly-142, Glu-157, Asn-172, and Asn-230; these read LAAG, GT, and YGD. Position 108 (Asp-108) interacts with Mg(2+). Asn-230 contributes to the Mg(2+) binding site. A linker region spans residues 233–253; it reads QQLASLERTWQGKLVADLQEA. Residues 254 to 458 are N-acetyltransferase; it reads GVQFADPTRV…KDNFQRPTKK (205 aa). UDP-N-acetyl-alpha-D-glucosamine is bound by residues Arg-336 and Lys-354. The active-site Proton acceptor is the His-366. Residues Tyr-369 and Asn-380 each contribute to the UDP-N-acetyl-alpha-D-glucosamine site. Residues Ala-383, 389–390, Ser-408, Ala-426, and Arg-443 contribute to the acetyl-CoA site; that span reads NY.

The protein in the N-terminal section; belongs to the N-acetylglucosamine-1-phosphate uridyltransferase family. It in the C-terminal section; belongs to the transferase hexapeptide repeat family. In terms of assembly, homotrimer. Mg(2+) is required as a cofactor.

The protein localises to the cytoplasm. The enzyme catalyses alpha-D-glucosamine 1-phosphate + acetyl-CoA = N-acetyl-alpha-D-glucosamine 1-phosphate + CoA + H(+). The catalysed reaction is N-acetyl-alpha-D-glucosamine 1-phosphate + UTP + H(+) = UDP-N-acetyl-alpha-D-glucosamine + diphosphate. It participates in nucleotide-sugar biosynthesis; UDP-N-acetyl-alpha-D-glucosamine biosynthesis; N-acetyl-alpha-D-glucosamine 1-phosphate from alpha-D-glucosamine 6-phosphate (route II): step 2/2. Its pathway is nucleotide-sugar biosynthesis; UDP-N-acetyl-alpha-D-glucosamine biosynthesis; UDP-N-acetyl-alpha-D-glucosamine from N-acetyl-alpha-D-glucosamine 1-phosphate: step 1/1. The protein operates within bacterial outer membrane biogenesis; LPS lipid A biosynthesis. Functionally, catalyzes the last two sequential reactions in the de novo biosynthetic pathway for UDP-N-acetylglucosamine (UDP-GlcNAc). The C-terminal domain catalyzes the transfer of acetyl group from acetyl coenzyme A to glucosamine-1-phosphate (GlcN-1-P) to produce N-acetylglucosamine-1-phosphate (GlcNAc-1-P), which is converted into UDP-GlcNAc by the transfer of uridine 5-monophosphate (from uridine 5-triphosphate), a reaction catalyzed by the N-terminal domain. This is Bifunctional protein GlmU from Psychrobacter arcticus (strain DSM 17307 / VKM B-2377 / 273-4).